The sequence spans 340 residues: Myb-related protein Zm1 (340 aa).

2 consecutive HTH myb-type domains span residues 11 to 63 (KVGL…INYL) and 64 to 118 (RPDL…KKKV). 2 consecutive DNA-binding regions (H-T-H motif) follow at residues 39-63 (WRAL…INYL) and 91-114 (WSKI…NTHL). Residues 116–126 (KKVAQREKKKA) are compositionally biased toward basic residues. Disordered stretches follow at residues 116–173 (KKVA…DATD) and 190–209 (DGAP…SSLT). The span at 133 to 166 (AGTPATAPLSSATSSTTTHNSSGGSDSGDQCGTS) shows a compositional bias: low complexity.

The protein resides in the nucleus. Transcription factor that positively regulates genes involved in anthocyanin biosynthesis such as A1. The sequence is that of Myb-related protein Zm1 from Zea mays (Maize).